The chain runs to 346 residues: Holliday junction branch migration complex subunit RuvB (346 aa).

The tract at residues 1–182 is large ATPase domain (RuvB-L); that stretch reads MKIELLTTPA…FGINSRFDYY (182 aa). ATP is bound by residues Ile21, Arg22, Gly63, Lys66, Thr67, Thr68, 129-131, Arg172, Tyr182, and Arg219; that span reads EDF. Position 67 (Thr67) interacts with Mg(2+). Residues 183–253 are small ATPAse domain (RuvB-S); it reads SPDLLEGIVM…IAMKTLECLD (71 aa). Residues 256–346 form a head domain (RuvB-H) region; it reads EEGLDDMDKK…GLFDADGNLS (91 aa). Positions 311 and 316 each coordinate DNA.

It belongs to the RuvB family. Homohexamer. Forms an RuvA(8)-RuvB(12)-Holliday junction (HJ) complex. HJ DNA is sandwiched between 2 RuvA tetramers; dsDNA enters through RuvA and exits via RuvB. An RuvB hexamer assembles on each DNA strand where it exits the tetramer. Each RuvB hexamer is contacted by two RuvA subunits (via domain III) on 2 adjacent RuvB subunits; this complex drives branch migration. In the full resolvosome a probable DNA-RuvA(4)-RuvB(12)-RuvC(2) complex forms which resolves the HJ.

It localises to the cytoplasm. It carries out the reaction ATP + H2O = ADP + phosphate + H(+). The RuvA-RuvB-RuvC complex processes Holliday junction (HJ) DNA during genetic recombination and DNA repair, while the RuvA-RuvB complex plays an important role in the rescue of blocked DNA replication forks via replication fork reversal (RFR). RuvA specifically binds to HJ cruciform DNA, conferring on it an open structure. The RuvB hexamer acts as an ATP-dependent pump, pulling dsDNA into and through the RuvAB complex. RuvB forms 2 homohexamers on either side of HJ DNA bound by 1 or 2 RuvA tetramers; 4 subunits per hexamer contact DNA at a time. Coordinated motions by a converter formed by DNA-disengaged RuvB subunits stimulates ATP hydrolysis and nucleotide exchange. Immobilization of the converter enables RuvB to convert the ATP-contained energy into a lever motion, pulling 2 nucleotides of DNA out of the RuvA tetramer per ATP hydrolyzed, thus driving DNA branch migration. The RuvB motors rotate together with the DNA substrate, which together with the progressing nucleotide cycle form the mechanistic basis for DNA recombination by continuous HJ branch migration. Branch migration allows RuvC to scan DNA until it finds its consensus sequence, where it cleaves and resolves cruciform DNA. This chain is Holliday junction branch migration complex subunit RuvB, found in Chlorobium phaeovibrioides (strain DSM 265 / 1930) (Prosthecochloris vibrioformis (strain DSM 265)).